A 955-amino-acid chain; its full sequence is Kinesin-like protein KIN-14L (955 aa).

Positions 19-140 (AARRFQAVQW…CILGLKAYHE (122 aa)) constitute a Calponin-homology (CH) domain. Positions 363-685 (NIRVYCRVRP…LKFAQRVSTV (323 aa)) constitute a Kinesin motor domain. Residue 445 to 452 (GQTGSGKT) coordinates ATP. A coiled-coil region spans residues 692–719 (AHKETREVMHLKEQIENLKRALGTEEWN). The interval 878-942 (RKENIPADPR…GKPIENGKKD (65 aa)) is disordered. The span at 894-916 (NNFSHIKSPDTSNAKTMRRQSLT) shows a compositional bias: polar residues.

This sequence belongs to the TRAFAC class myosin-kinesin ATPase superfamily. Kinesin family. KIN-14 subfamily.

This is Kinesin-like protein KIN-14L from Arabidopsis thaliana (Mouse-ear cress).